The chain runs to 540 residues: MSASAAPPNKLPADFLWGFATASFQIEGATDVDGRGKSIWDDFSKIPGKTLDGKNGDVATDSYNRWREDVDLLVQYGVKSYRFSISWSRIIPLGGRNDPVNEAGIKFYSDLIDALLERGIVPFVTLYHWDLPQALHDRYLGWLNKDEIVQDYVRYAGVCFERFGDRVKHWLTMNEPWCISILGYGRGVFAPGRSSDRMRSPEGDSSTEPWIVGHSVILAHAYAVKLYREQFKANRGGQIGITLNGDWAMPYDDSPQNIEAAQHALDVAIGWFADPIYLGQYPAYMKEMLGDRLPEFTPEELAVVKGSSDFYGMNTYTTNLCKAGGEDEFQGNVEYTFTRPDGTQLGTAAHCSWLQDYAPGFRDLLNYLYKRYRKPIYVTENGFAVKDENSKPLEEALKDDDRVHYYQGVTDSLLAAVKEDGVDVRGYFGWSLLDNFEWADGYITRFGVTYVDYDTQKRYPKDSGKFLSQWFPAHIAESPKPAAETKKAATPSPLKPHGAISNGVSKKSSATKEPKSASRKKGRKAPFARFTAYISAFLGL.

The substrate site is built by Gln-25, His-128, and Asn-174. The active-site Proton donor is Glu-175. Tyr-316 contacts substrate. The active-site Nucleophile is Glu-380. Substrate-binding positions include Trp-430 and 437–438; that span reads EW. A compositionally biased stretch (low complexity) spans 481–492; sequence PAAETKKAATPS. The disordered stretch occupies residues 481–524; the sequence is PAAETKKAATPSPLKPHGAISNGVSKKSSATKEPKSASRKKGRK.

The protein belongs to the glycosyl hydrolase 1 family.

The catalysed reaction is Hydrolysis of terminal, non-reducing beta-D-glucosyl residues with release of beta-D-glucose.. In terms of biological role, plays an important role in cellulose degradation. Shows hydrolytic activity against several glycosidic compounds. The chain is Beta-glucosidase 1B from Phanerodontia chrysosporium (White-rot fungus).